We begin with the raw amino-acid sequence, 231 residues long: Large ribosomal subunit protein uL1 (231 aa).

It belongs to the universal ribosomal protein uL1 family. Part of the 50S ribosomal subunit.

In terms of biological role, binds directly to 23S rRNA. The L1 stalk is quite mobile in the ribosome, and is involved in E site tRNA release. Its function is as follows. Protein L1 is also a translational repressor protein, it controls the translation of the L11 operon by binding to its mRNA. The sequence is that of Large ribosomal subunit protein uL1 from Cupriavidus pinatubonensis (strain JMP 134 / LMG 1197) (Cupriavidus necator (strain JMP 134)).